We begin with the raw amino-acid sequence, 427 residues long: Large ribosomal subunit protein uL4 (427 aa).

The residue at position 2 (alanine 2) is an N-acetylalanine. Lysine 14 bears the N6-acetyllysine mark. Arginine 97 bears the Omega-N-methylarginine mark. Position 106 is an N6-acetyllysine (lysine 106). Residue lysine 239 forms a Glycyl lysine isopeptide (Lys-Gly) (interchain with G-Cter in SUMO2) linkage. An N6-acetyllysine modification is found at lysine 259. Threonine 266 carries the phosphothreonine modification. Residues serine 290 and serine 295 each carry the phosphoserine modification. Arginine 300 carries the post-translational modification Citrulline. Residue lysine 327 forms a Glycyl lysine isopeptide (Lys-Gly) (interchain with G-Cter in SUMO2) linkage. Residues lysine 333 and lysine 353 each carry the N6-acetyllysine modification. Lysine 364 carries the N6-acetyllysine; alternate modification. A Glycyl lysine isopeptide (Lys-Gly) (interchain with G-Cter in SUMO1); alternate cross-link involves residue lysine 364. Serine 365 carries the post-translational modification Phosphoserine. The segment at 369–427 (AAVAGKKPVVGKKGKKVAVGVKKQKKPLVGKKAAATKKPAPEKKSTEKKPTTEEKKPAA) is disordered. Residues 377–397 (VVGKKGKKVAVGVKKQKKPLV) are compositionally biased toward basic residues. Residues 407–427 (PAPEKKSTEKKPTTEEKKPAA) show a composition bias toward basic and acidic residues.

Belongs to the universal ribosomal protein uL4 family. As to quaternary structure, component of the large ribosomal subunit. May bind IPO9 with low affinity. Interacts with RBM3. Citrullinated by PADI4.

Its subcellular location is the cytoplasm. In terms of biological role, component of the large ribosomal subunit. The ribosome is a large ribonucleoprotein complex responsible for the synthesis of proteins in the cell. This Macaca fascicularis (Crab-eating macaque) protein is Large ribosomal subunit protein uL4 (RPL4).